The following is a 163-amino-acid chain: E1B protein, small T-antigen (163 aa).

This sequence belongs to the adenoviridae E1B 19 kDa protein family.

The protein resides in the host cell membrane. Its subcellular location is the host nucleus envelope. It is found in the host nucleus lamina. Putative adenovirus Bcl-2 homolog that inhibits apoptosis induced by TNF or FAS pathways, as well as p53-mediated apoptosis. Without E1B 19K function, virus production is compromised because of premature death of host cell. Interacts with Bax protein in cell lysates. This is E1B protein, small T-antigen from Human adenovirus A serotype 12 (HAdV-12).